The following is a 309-amino-acid chain: Coenzyme PQQ synthesis protein B (309 aa).

This sequence belongs to the PqqB family.

It participates in cofactor biosynthesis; pyrroloquinoline quinone biosynthesis. May be involved in the transport of PQQ or its precursor to the periplasm. This chain is Coenzyme PQQ synthesis protein B, found in Nitrosococcus oceani (strain ATCC 19707 / BCRC 17464 / JCM 30415 / NCIMB 11848 / C-107).